A 251-amino-acid chain; its full sequence is Probable-ribose 5-phosphate isomerase (251 aa).

It belongs to the ribose 5-phosphate isomerase family.

The catalysed reaction is aldehydo-D-ribose 5-phosphate = D-ribulose 5-phosphate. The protein operates within carbohydrate degradation; pentose phosphate pathway; D-ribose 5-phosphate from D-ribulose 5-phosphate (non-oxidative stage): step 1/1. The polypeptide is Probable-ribose 5-phosphate isomerase (rpia-1) (Caenorhabditis elegans).